The following is a 357-amino-acid chain: Membrane-bound lytic murein transglycosylase C (357 aa).

Residues 1 to 15 (MKKYLLLALLPFLYA) form the signal peptide. A lipid anchor (N-palmitoyl cysteine) is attached at Cys16. Residue Cys16 is the site of S-diacylglycerol cysteine attachment.

Belongs to the transglycosylase Slt family.

The protein localises to the cell outer membrane. The catalysed reaction is Exolytic cleavage of the (1-&gt;4)-beta-glycosidic linkage between N-acetylmuramic acid (MurNAc) and N-acetylglucosamine (GlcNAc) residues in peptidoglycan, from either the reducing or the non-reducing ends of the peptidoglycan chains, with concomitant formation of a 1,6-anhydrobond in the MurNAc residue.. Functionally, murein-degrading enzyme. May play a role in recycling of muropeptides during cell elongation and/or cell division. The protein is Membrane-bound lytic murein transglycosylase C of Haemophilus influenzae (strain PittEE).